We begin with the raw amino-acid sequence, 199 residues long: Protein GrpE (199 aa).

Residues 1-50 (MAKKSTRTTPEDSQASTTDSAATSTASEATQAATSATDDQAEQTTAVDPT) are disordered. A compositionally biased stretch (low complexity) spans 11 to 46 (EDSQASTTDSAATSTASEATQAATSATDDQAEQTTA).

The protein belongs to the GrpE family. As to quaternary structure, homodimer.

The protein resides in the cytoplasm. Participates actively in the response to hyperosmotic and heat shock by preventing the aggregation of stress-denatured proteins, in association with DnaK and GrpE. It is the nucleotide exchange factor for DnaK and may function as a thermosensor. Unfolded proteins bind initially to DnaJ; upon interaction with the DnaJ-bound protein, DnaK hydrolyzes its bound ATP, resulting in the formation of a stable complex. GrpE releases ADP from DnaK; ATP binding to DnaK triggers the release of the substrate protein, thus completing the reaction cycle. Several rounds of ATP-dependent interactions between DnaJ, DnaK and GrpE are required for fully efficient folding. This chain is Protein GrpE, found in Lactiplantibacillus plantarum (strain ATCC BAA-793 / NCIMB 8826 / WCFS1) (Lactobacillus plantarum).